A 119-amino-acid chain; its full sequence is Probable non-functional T cell receptor gamma variable 10 (119 aa).

Residues 1–19 form the signal peptide; sequence MSLLEAFAFSSWALGLGLS. Residues 24–119 form the Ig-like domain; it reads FQLSISTEVK…MAVYYCAAWD (96 aa). The cysteines at positions 40 and 115 are disulfide-linked.

Gamma-delta TR is a heterodimer composed of a gamma and delta chain; disulfide-linked. The gamma-delta TR is associated with the transmembrane signaling CD3 coreceptor proteins following the stoichiometry: a single gamma-delta TR heterodimer associates with one CD3D-CD3E heterodimer, one CD3G-CD3E heterodimer and one CD247 homodimer forming a stable octameric structure. Upon activation, gamma-delta TR complex associates with FCER1G to initiate intracellular signaling.

It localises to the cell membrane. In terms of biological role, probable non-functional open reading frame (ORF) of V region of the variable domain of T cell receptor (TR) gamma chain. Non-functional ORF generally cannot participate in the synthesis of a productive T cell receptor (TR) chain due to altered V-(D)-J or switch recombination and/or splicing site (at mRNA level) and/or conserved amino acid change (protein level). Gamma-delta TRs recognize a variety of self and foreign non-peptide antigens frequently expressed at the epithelial boundaries between the host and external environment, including endogenous lipids presented by MH-like protein CD1D and phosphoantigens presented by butyrophilin-like molecule BTN3A1. Upon antigen recognition induces rapid, innate-like immune responses involved in pathogen clearance and tissue repair. Binding of gamma-delta TR complex to antigen triggers phosphorylation of immunoreceptor tyrosine-based activation motifs (ITAMs) in the CD3 chains by the LCK and FYN kinases, allowing the recruitment, phosphorylation, and activation of ZAP70 that facilitates phosphorylation of the scaffolding proteins LCP2 and LAT. This lead to the formation of a supramolecular signalosome that recruits the phospholipase PLCG1, resulting in calcium mobilization and ERK activation, ultimately leading to T cell expansion and differentiation into effector cells. Gamma-delta TRs are produced through somatic rearrangement of a limited repertoire of variable (V), diversity (D), and joining (J) genes. The potential diversity of gamma-delta TRs is conferred by the unique ability to rearrange (D) genes in tandem and to utilize all three reading frames. The combinatorial diversity is considerably increased by the sequence exonuclease trimming and random nucleotide (N) region additions which occur during the V-(D)-J rearrangements. The polypeptide is Probable non-functional T cell receptor gamma variable 10 (Homo sapiens (Human)).